A 517-amino-acid polypeptide reads, in one-letter code: Zinc finger protein AEBP2 (517 aa).

A disordered region spans residues 1–229; it reads MAAAITDMAD…DSEDSISSTI (229 aa). Alanine 2 is subject to N-acetylalanine. 2 positions are modified to phosphoserine: serine 18 and serine 24. Residues 36 to 51 are compositionally biased toward acidic residues; the sequence is PEEEEEEEEEEEEAEA. Over residues 61 to 78 the composition is skewed to gly residues; it reads GGSGGGGGGGGGGVGGGE. The span at 94–121 shows a compositional bias: acidic residues; the sequence is GEDEDEEEDDEEEEDESSSSGGGEEESS. Residues 122–150 are compositionally biased toward low complexity; that stretch reads AESLVGSSGGSSSDETRSLSPGAASSSSG. Position 141 is a phosphoserine (serine 141). The span at 152–163 shows a compositional bias: basic and acidic residues; the sequence is GDGKEGLEEPKG. 2 stretches are compositionally biased toward gly residues: residues 166–175 and 185–196; these read GSQGGGGGGS and GDEGYGTGGGGS. Serine 206, serine 210, and serine 211 each carry phosphoserine. The interaction with RBBP4 stretch occupies residues 209 to 294; the sequence is MSSDGEPLSR…IHVDGQRGGV (86 aa). The C2H2-type 1 zinc finger occupies 261-286; the sequence is YNCCWDQCQACFNSSPDLADHIRSIH. A C2H2-type 2; degenerate zinc finger spans residues 300–322; sequence KGCKVYNTPSTSQSWLQRHMLTH. The segment at 328 to 352 adopts a C2H2-type 3 zinc-finger fold; sequence FKCVVGGCNASFASQGGLARHVPTH. Over residues 352-365 the composition is skewed to polar residues; it reads HFSQQNSSKVSSQP. A disordered region spans residues 352 to 394; it reads HFSQQNSSKVSSQPKAKEESPSKAGMNKRRKLKNKRRRSLPRP. Residues 377-392 show a composition bias toward basic residues; sequence MNKRRKLKNKRRRSLP. Phosphoserine is present on serine 390. The interval 407–478 is interaction with SUZ12; the sequence is RHRAICFNLS…QLKTKVVHLS (72 aa). Residues 495–517 are important for nucleosome binding activity of the PRC2 complex; it reads TMPQKRLKRTLIRKVFNLYLSKQ.

Belongs to the AEBP2/jing C2H2-type zinc-finger family. As to quaternary structure, self-associates. Associates with the PRC2 complex, which consists of the core components EED, EZH1 or EZH2, SUZ12, and RBBP4, and various combinations of accessory subunits including AEBP2, JARID2, PHF19, MTF2 and EPOP. Found in a monomeric PRC2.2 (class 2) complex consisting of at least SUZ12, RBBP4, AEBP2 and JARID2. Within the PRC2 complex, interacts directly with SUZ12; competes with PHF19 for SUZ12 binding. Interacts with EED, EZH2, and RBBP4. May also interact with RBBP7.

Its subcellular location is the nucleus. Acts as an accessory subunit for the core Polycomb repressive complex 2 (PRC2), which mediates histone H3K27 (H3K27me3) trimethylation on chromatin leading to transcriptional repression of the affected target gene. Plays a role in nucleosome localization of the PRC2 complex. This Homo sapiens (Human) protein is Zinc finger protein AEBP2 (AEBP2).